The chain runs to 405 residues: MQVLNFYVNPYLNLSFDLLPVANHFCRYSRHWKMSRDITRPDELASLIQLQDRLQTQQDELFRKQQELQFRETYAGTGSTKSFTQGLIIGQLSVIILLGIFIKFFVFADSSTTSSTSGNGISSKTDVSNILVKRKKNGDGDAGSEGRSDEVDTILEKTYYDVDNHAPESLDWFNVLIAQTISSFRYEALQSDNIYHSLKEFLSKSELPDYLGDIQLTEIDIGDDFPIFSNCRIRPSKDSHGRLEAKIDVDLSDTLTMGIQTKLILNQPRPLTAVLPISLSVSIVRFSGCLTVSLINTNEEEFSEPRVAMDSPQSTRDDNSEEPNGTALLFSFSPDYRLEFNVKSLIGSRAKLQDVPKISSLIEHRLRSWFVERCIEPRFQVVKLPSLWPRKKNTRQPVSTTESDH.

The Lumenal segment spans residues 1–86 (MQVLNFYVNP…TGSTKSFTQG (86 aa)). The helical transmembrane segment at 87–107 (LIIGQLSVIILLGIFIKFFVF) threads the bilayer. Over 108 to 405 (ADSSTTSSTS…QPVSTTESDH (298 aa)) the chain is Cytoplasmic. The SMP-LTD domain maps to 166-385 (APESLDWFNV…EPRFQVVKLP (220 aa)). The disordered stretch occupies residues 303–324 (SEPRVAMDSPQSTRDDNSEEPN).

It belongs to the MMM1 family. Homodimer. Component of the ER-mitochondria encounter structure (ERMES) or MDM complex, composed of MMM1, MDM10, MDM12 and MDM34. An MMM1 homodimer associates with one molecule of MDM12 on each side in a pairwise head-to-tail manner, and the SMP-LTD domains of MMM1 and MDM12 generate a continuous hydrophobic tunnel for phospholipid trafficking.

It is found in the endoplasmic reticulum membrane. Functionally, component of the ERMES/MDM complex, which serves as a molecular tether to connect the endoplasmic reticulum (ER) and mitochondria. Components of this complex are involved in the control of mitochondrial shape and protein biogenesis, and function in nonvesicular lipid trafficking between the ER and mitochondria. The MDM12-MMM1 subcomplex functions in the major beta-barrel assembly pathway that is responsible for biogenesis of all outer membrane beta-barrel proteins, and acts in a late step after the SAM complex. The MDM10-MDM12-MMM1 subcomplex further acts in the TOM40-specific pathway after the action of the MDM12-MMM1 complex. Essential for establishing and maintaining the structure of mitochondria and maintenance of mtDNA nucleoids. In Meyerozyma guilliermondii (strain ATCC 6260 / CBS 566 / DSM 6381 / JCM 1539 / NBRC 10279 / NRRL Y-324) (Yeast), this protein is Maintenance of mitochondrial morphology protein 1.